The following is a 527-amino-acid chain: Probable malate:quinone oxidoreductase 2 (527 aa).

The protein belongs to the MQO family. FAD serves as cofactor.

It catalyses the reaction (S)-malate + a quinone = a quinol + oxaloacetate. The protein operates within carbohydrate metabolism; tricarboxylic acid cycle; oxaloacetate from (S)-malate (quinone route): step 1/1. This chain is Probable malate:quinone oxidoreductase 2, found in Pseudomonas putida (strain ATCC 47054 / DSM 6125 / CFBP 8728 / NCIMB 11950 / KT2440).